Consider the following 698-residue polypeptide: Elongation factor G 1 (698 aa).

A tr-type G domain is found at 8–290 (ERYRNIGICA…AVVEFLPAPV (283 aa)). GTP-binding positions include 17–24 (AHVDAGKT), 88–92 (DTPGH), and 142–145 (NKMD).

The protein belongs to the TRAFAC class translation factor GTPase superfamily. Classic translation factor GTPase family. EF-G/EF-2 subfamily.

The protein resides in the cytoplasm. Catalyzes the GTP-dependent ribosomal translocation step during translation elongation. During this step, the ribosome changes from the pre-translocational (PRE) to the post-translocational (POST) state as the newly formed A-site-bound peptidyl-tRNA and P-site-bound deacylated tRNA move to the P and E sites, respectively. Catalyzes the coordinated movement of the two tRNA molecules, the mRNA and conformational changes in the ribosome. The protein is Elongation factor G 1 of Shewanella sp. (strain MR-4).